The sequence spans 104 residues: Class I hydrophobin 12 (104 aa).

An N-terminal signal peptide occupies residues 1 to 25 (MFSKATLFFTAAVVIVAAGATPTTS). 4 disulfide bridges follow: Cys-27–Cys-85, Cys-34–Cys-79, Cys-35–Cys-67, and Cys-86–Cys-99.

It belongs to the fungal hydrophobin family. Self-assembles to form functional amyloid fibrils called rodlets. Self-assembly into fibrillar rodlets occurs spontaneously at hydrophobic:hydrophilic interfaces and the rodlets further associate laterally to form amphipathic monolayers.

Its subcellular location is the secreted. It is found in the cell wall. In terms of biological role, aerial growth, conidiation, and dispersal of filamentous fungi in the environment rely upon a capability of their secreting small amphipathic proteins called hydrophobins (HPBs) with low sequence identity. Class I can self-assemble into an outermost layer of rodlet bundles on aerial cell surfaces, conferring cellular hydrophobicity that supports fungal growth, development and dispersal; whereas Class II form highly ordered films at water-air interfaces through intermolecular interactions but contribute nothing to the rodlet structure. Hydph12 is a class I hydrophobin involved in the formation of mycelium knots. This Pleurotus ostreatus (strain PC15) (Oyster mushroom) protein is Class I hydrophobin 12.